The primary structure comprises 114 residues: Large ribosomal subunit protein bL19 (114 aa).

It belongs to the bacterial ribosomal protein bL19 family.

Its function is as follows. This protein is located at the 30S-50S ribosomal subunit interface and may play a role in the structure and function of the aminoacyl-tRNA binding site. This Thermobifida fusca (strain YX) protein is Large ribosomal subunit protein bL19.